An 85-amino-acid polypeptide reads, in one-letter code: MQSTMKMFGIILMVIFSVSCGPSAPQMKTREVAERTHKCSLVRGTCKSECNSWEYKYNYCHTEPCCVVREYKRMEKLLSTPKYTT.

The N-terminal stretch at 1-23 (MQSTMKMFGIILMVIFSVSCGPS) is a signal peptide. 3 cysteine pairs are disulfide-bonded: Cys39–Cys65, Cys46–Cys60, and Cys50–Cys66.

It belongs to the beta-defensin family.

Its subcellular location is the secreted. Has antibacterial activity. This Mus musculus (Mouse) protein is Beta-defensin 18 (Defb18).